A 206-amino-acid polypeptide reads, in one-letter code: Homoserine/homoserine lactone efflux protein (206 aa).

Transmembrane regions (helical) follow at residues 5–25, 45–65, 68–88, 117–137, 148–168, and 182–202; these read WWFA…SGAI, GLQT…GTLF, SLLA…WLGI, FVNL…PQFI, LILG…YATL, and MKAL…LLAS.

Belongs to the Rht family.

The protein localises to the cell membrane. In terms of biological role, conducts the efflux of homoserine and homoserine lactone. The protein is Homoserine/homoserine lactone efflux protein (rhtB) of Salmonella typhimurium (strain LT2 / SGSC1412 / ATCC 700720).